Consider the following 384-residue polypeptide: Dual-specificity RNA methyltransferase RlmN (384 aa).

Glu-105 functions as the Proton acceptor in the catalytic mechanism. The Radical SAM core domain maps to 111-350 (EDDRATLCVS…TIVRKTRGDD (240 aa)). A disulfide bridge links Cys-118 with Cys-355. Residues Cys-125, Cys-129, and Cys-132 each contribute to the [4Fe-4S] cluster site. S-adenosyl-L-methionine contacts are provided by residues 179–180 (GE), Ser-211, 233–235 (SLH), and Asn-312. Cys-355 (S-methylcysteine intermediate) is an active-site residue.

Belongs to the radical SAM superfamily. RlmN family. Requires [4Fe-4S] cluster as cofactor.

The protein resides in the cytoplasm. The enzyme catalyses adenosine(2503) in 23S rRNA + 2 reduced [2Fe-2S]-[ferredoxin] + 2 S-adenosyl-L-methionine = 2-methyladenosine(2503) in 23S rRNA + 5'-deoxyadenosine + L-methionine + 2 oxidized [2Fe-2S]-[ferredoxin] + S-adenosyl-L-homocysteine. It catalyses the reaction adenosine(37) in tRNA + 2 reduced [2Fe-2S]-[ferredoxin] + 2 S-adenosyl-L-methionine = 2-methyladenosine(37) in tRNA + 5'-deoxyadenosine + L-methionine + 2 oxidized [2Fe-2S]-[ferredoxin] + S-adenosyl-L-homocysteine. In terms of biological role, specifically methylates position 2 of adenine 2503 in 23S rRNA and position 2 of adenine 37 in tRNAs. m2A2503 modification seems to play a crucial role in the proofreading step occurring at the peptidyl transferase center and thus would serve to optimize ribosomal fidelity. The sequence is that of Dual-specificity RNA methyltransferase RlmN from Escherichia coli O17:K52:H18 (strain UMN026 / ExPEC).